A 1193-amino-acid polypeptide reads, in one-letter code: Pyruvate carboxylase (1193 aa).

The region spanning 41–493 (QFQKILVANR…WTTFIDDTTE (453 aa)) is the Biotin carboxylation domain. ATP is bound by residues Lys-159, Glu-243, and His-278. One can recognise an ATP-grasp domain in the interval 163–360 (RQLAIRCNVP…IVAAQIQIAA (198 aa)). Residue Arg-335 is part of the active site. Positions 579-847 (CLIMDTTWRD…DPGLNSAHVR (269 aa)) constitute a Pyruvate carboxyltransferase domain. Substrate is bound by residues 587–591 (RDAHQ) and Arg-660. Asp-588 provides a ligand contact to a divalent metal cation. 3 residues coordinate a divalent metal cation: Lys-756, His-786, and His-788. At Lys-756 the chain carries N6-carboxylysine. Residue Thr-921 participates in substrate binding. The 76-residue stretch at 1116–1191 (KADVGDSSQV…DGQDLVCKIT (76 aa)) folds into the Biotinyl-binding domain. At Lys-1157 the chain carries N6-biotinyllysine.

It depends on biotin as a cofactor. Zn(2+) is required as a cofactor.

It localises to the cytoplasm. It catalyses the reaction hydrogencarbonate + pyruvate + ATP = oxaloacetate + ADP + phosphate + H(+). Its pathway is carbohydrate biosynthesis; gluconeogenesis. In terms of biological role, pyruvate carboxylase catalyzes a 2-step reaction, involving the ATP-dependent carboxylation of the covalently attached biotin in the first step and the transfer of the carboxyl group to pyruvate in the second. This Aspergillus terreus (strain NIH 2624 / FGSC A1156) protein is Pyruvate carboxylase (pyc).